We begin with the raw amino-acid sequence, 257 residues long: Deoxyribose-phosphate aldolase (257 aa).

Catalysis depends on Asp102, which acts as the Proton donor/acceptor. Lys166 serves as the catalytic Schiff-base intermediate with acetaldehyde. Lys198 functions as the Proton donor/acceptor in the catalytic mechanism.

This sequence belongs to the DeoC/FbaB aldolase family. DeoC type 2 subfamily.

Its subcellular location is the cytoplasm. The catalysed reaction is 2-deoxy-D-ribose 5-phosphate = D-glyceraldehyde 3-phosphate + acetaldehyde. The protein operates within carbohydrate degradation; 2-deoxy-D-ribose 1-phosphate degradation; D-glyceraldehyde 3-phosphate and acetaldehyde from 2-deoxy-alpha-D-ribose 1-phosphate: step 2/2. Functionally, catalyzes a reversible aldol reaction between acetaldehyde and D-glyceraldehyde 3-phosphate to generate 2-deoxy-D-ribose 5-phosphate. The chain is Deoxyribose-phosphate aldolase from Shewanella loihica (strain ATCC BAA-1088 / PV-4).